Consider the following 517-residue polypeptide: MQLTVVLVGIVVLVLAYLSSTGKVYPHGPQALPILGNLVQFRSLQARPDQELLRIAKKYGQLCMLWFGSNPVLIISSPKAAKDMMDQRGAIYSSRPAQNSFRATQWPWRLVTTPTGETFRLLRKIYHNLLGPQQSLHFRRYQDFESKVMLADLLDRPEAFQLGVERFALSVIFSACYQVRLDDLAHPTMTLFYSIWEQMLKYFQPGSLLLDFFPILQRLPKSMQPWLKLANSLRARELRLHRAFLSTLKKQVQNSTAVACFGTMLVKIQEKENISDERACDILAMLIGAGADTTSSYLQTFFKVIALHPNAALKAQKELDRVVGQDRLPTWDDEPNLPYVRAIIKEVHRWAPIGSLGIPHATTDSDVYDGKHIPRNTIVFPNLTALCRDAERYHNPDLFLPERFLGDDLDAYSSALHPDWRVRDHFHYGFGRRLCQGIFVAEASLYIVVSRLLWGFDIAKEEGESLDMDDKLAGLVTKPKPFRVTIKSRAPSYERVMRQERAIAKTDILSFNDVHFV.

The chain crosses the membrane as a helical span at residues 5–27 (VVLVGIVVLVLAYLSSTGKVYPH). Residue Cys435 coordinates heme.

The protein belongs to the cytochrome P450 family. Heme serves as cofactor.

It localises to the membrane. Cytochrome P450 monooxygenase; part of the gene cluster that mediates the biosynthesis of antifungal fernane-type triterpenoid polytolypin. PolD doe not seem to be involved in the biosynthesis of polytolypin. Within the pathway, the triterpene cyclase polA first catalyzes the cyclization of 2,3-oxidosqualene to motiol, polc converts the 4-alpha-methyl group of motiol to a carboxyl group, polB is responsible for appending a hydroxyl group at the 2-alpha position and polE is a dual functional P450, which can catalyze the formation of both the 1-beta-hydroxyl group and 10-beta-carboxyl group. The polypeptide is Cytochrome P450 monooxygenase polD (Polytolypa hystricis (strain UAMH7299)).